Reading from the N-terminus, the 518-residue chain is Bifunctional methyltransferase (518 aa).

Residues 1–300 (MQYSIKQILS…SHNRVIEISP (300 aa)) are hemK. Residues 1–302 (MQYSIKQILS…NRVIEISPIN (302 aa)) form an RF MTase region. S-adenosyl-L-methionine-binding positions include 140–144 (GTGSG), Asp-163, Trp-192, Asn-207, Glu-347, Glu-372, Asn-399, and Asp-421. 207 to 210 (NPPY) is a substrate binding site. The tract at residues 301–518 (INLNRSYARR…MILQHALTDH (218 aa)) is tRNA (guanine-N(7)-)-methyltransferase. The tract at residues 305–518 (RSYARRIGKS…MILQHALTDH (214 aa)) is tRNA MTase. The active site involves Asp-421. Substrate is bound by residues Lys-425 and Asp-457.

This sequence in the C-terminal section; belongs to the class I-like SAM-binding methyltransferase superfamily. TrmB family. The protein in the N-terminal section; belongs to the protein N5-glutamine methyltransferase family. PrmC subfamily.

It catalyses the reaction L-glutaminyl-[peptide chain release factor] + S-adenosyl-L-methionine = N(5)-methyl-L-glutaminyl-[peptide chain release factor] + S-adenosyl-L-homocysteine + H(+). The catalysed reaction is guanosine(46) in tRNA + S-adenosyl-L-methionine = N(7)-methylguanosine(46) in tRNA + S-adenosyl-L-homocysteine. Functionally, methylates the class 1 translation termination release factors RF1/PrfA and RF2/PrfB on the glutamine residue of the universally conserved GGQ motif. Its function is as follows. Catalyzes the formation of N(7)-methylguanine at position 46 (m7G46) in tRNA. The polypeptide is Bifunctional methyltransferase (prmC/trmB) (Rickettsia prowazekii (strain Madrid E)).